We begin with the raw amino-acid sequence, 459 residues long: Beta-glucosidase (459 aa).

Glu-171 (proton donor) is an active-site residue. The active-site Nucleophile is the Glu-359.

Belongs to the glycosyl hydrolase 1 family.

The catalysed reaction is Hydrolysis of terminal, non-reducing beta-D-glucosyl residues with release of beta-D-glucose.. The sequence is that of Beta-glucosidase (abg) from Agrobacterium sp. (strain ATCC 21400).